The sequence spans 297 residues: Nitrogenase iron protein (297 aa).

11–18 is an ATP binding site; sequence GKGGIGKS. C99 is a [4Fe-4S] cluster binding site. Position 102 is an ADP-ribosylarginine; by dinitrogenase reductase ADP-ribosyltransferase (R102). C133 provides a ligand contact to [4Fe-4S] cluster.

Belongs to the NifH/BchL/ChlL family. Homodimer. It depends on [4Fe-4S] cluster as a cofactor. The reversible ADP-ribosylation of Arg-102 inactivates the nitrogenase reductase and regulates nitrogenase activity.

The catalysed reaction is N2 + 8 reduced [2Fe-2S]-[ferredoxin] + 16 ATP + 16 H2O = H2 + 8 oxidized [2Fe-2S]-[ferredoxin] + 2 NH4(+) + 16 ADP + 16 phosphate + 6 H(+). In terms of biological role, the key enzymatic reactions in nitrogen fixation are catalyzed by the nitrogenase complex, which has 2 components: the iron protein and the molybdenum-iron protein. The protein is Nitrogenase iron protein (nifH) of Rhizobium etli.